Consider the following 262-residue polypeptide: uncharacterized protein (262 aa).

The stretch at 41-118 forms a coiled coil; it reads ELQKNEKIDK…EEKAEDFINK (78 aa).

This is an uncharacterized protein from Plasmodium falciparum (isolate 3D7).